The primary structure comprises 331 residues: Cytosolic Fe-S cluster assembly factor NBP35 (331 aa).

Residues 1–10 (MSPSQTQIEK) are compositionally biased toward polar residues. Residues 1–32 (MSPSQTQIEKSQLAAPEPEHCPGPESELAGQG) are disordered. 4 residues coordinate [4Fe-4S] cluster: cysteine 21, cysteine 35, cysteine 38, and cysteine 44. ATP is bound at residue 75–82 (GKGGVGKS). Positions 249 and 252 each coordinate [4Fe-4S] cluster.

The protein belongs to the Mrp/NBP35 ATP-binding proteins family. NUBP1/NBP35 subfamily. In terms of assembly, heterotetramer of 2 NBP35 and 2 CFD1 chains. The cofactor is [4Fe-4S] cluster.

It localises to the cytoplasm. It is found in the nucleus. In terms of biological role, component of the cytosolic iron-sulfur (Fe/S) protein assembly (CIA) machinery. Required for maturation of extramitochondrial Fe-S proteins. The NBP35-CFD1 heterotetramer forms a Fe-S scaffold complex, mediating the de novo assembly of an Fe-S cluster and its transfer to target apoproteins. Required for biogenesis and export of both ribosomal subunits, which may reflect a role in assembly of the Fe/S clusters in RLI1, a protein which performs rRNA processing and ribosome export. The polypeptide is Cytosolic Fe-S cluster assembly factor NBP35 (Candida albicans (strain SC5314 / ATCC MYA-2876) (Yeast)).